The following is a 252-amino-acid chain: Isoprenyl transferase (252 aa).

The active site involves Asp-32. Asp-32 lines the Mg(2+) pocket. Substrate is bound by residues 33 to 36, Trp-37, Arg-45, His-49, and 77 to 79; these read GNGR and STE. Asn-80 (proton acceptor) is an active-site residue. Substrate contacts are provided by residues Trp-81, Arg-83, Arg-200, and 206 to 208; that span reads RLS. Position 219 (Glu-219) interacts with Mg(2+).

This sequence belongs to the UPP synthase family. Homodimer. The cofactor is Mg(2+).

Catalyzes the condensation of isopentenyl diphosphate (IPP) with allylic pyrophosphates generating different type of terpenoids. This chain is Isoprenyl transferase, found in Listeria innocua serovar 6a (strain ATCC BAA-680 / CLIP 11262).